The chain runs to 484 residues: Glutamate--tRNA ligase (484 aa).

A 'HIGH' region motif is present at residues 9 to 19 (PSPTGNLHIGT). Residues cysteine 98, cysteine 100, histidine 125, and histidine 127 each coordinate Zn(2+). A 'KMSKS' region motif is present at residues 250 to 254 (KLSKR). Lysine 253 contributes to the ATP binding site.

Belongs to the class-I aminoacyl-tRNA synthetase family. Glutamate--tRNA ligase type 1 subfamily. Monomer. Zn(2+) serves as cofactor.

The protein resides in the cytoplasm. The enzyme catalyses tRNA(Glu) + L-glutamate + ATP = L-glutamyl-tRNA(Glu) + AMP + diphosphate. Its function is as follows. Catalyzes the attachment of glutamate to tRNA(Glu) in a two-step reaction: glutamate is first activated by ATP to form Glu-AMP and then transferred to the acceptor end of tRNA(Glu). The sequence is that of Glutamate--tRNA ligase from Crocosphaera subtropica (strain ATCC 51142 / BH68) (Cyanothece sp. (strain ATCC 51142)).